A 187-amino-acid chain; its full sequence is Elongation factor P (187 aa).

The protein belongs to the elongation factor P family.

Its subcellular location is the cytoplasm. Its pathway is protein biosynthesis; polypeptide chain elongation. Functionally, involved in peptide bond synthesis. Stimulates efficient translation and peptide-bond synthesis on native or reconstituted 70S ribosomes in vitro. Probably functions indirectly by altering the affinity of the ribosome for aminoacyl-tRNA, thus increasing their reactivity as acceptors for peptidyl transferase. This is Elongation factor P from Jannaschia sp. (strain CCS1).